The following is a 249-amino-acid chain: 5-amino-6-(5-phospho-D-ribitylamino)uracil phosphatase YcsE (249 aa).

Residue Asp-16 is the Nucleophile of the active site. Asp-16 is a Mg(2+) binding site. A phosphate-binding site is contributed by Met-17. Asp-18 contributes to the Mg(2+) binding site. Phosphate-binding positions include 50 to 51 and Lys-177; that span reads TG. Positions 200 and 201 each coordinate Mg(2+). Asn-203 is a binding site for phosphate.

It belongs to the HAD-like hydrolase superfamily. Cof family. Requires Mg(2+) as cofactor.

It catalyses the reaction 5-amino-6-(5-phospho-D-ribitylamino)uracil + H2O = 5-amino-6-(D-ribitylamino)uracil + phosphate. It participates in cofactor biosynthesis; riboflavin biosynthesis; 5-amino-6-(D-ribitylamino)uracil from GTP: step 4/4. Functionally, catalyzes the dephosphorylation of the riboflavin precursor 5-amino-6-(5-phospho-D-ribitylamino)uracil and of flavin mononucleotide (FMN) in vitro. To a lesser extent, may also catalyze the dephosphorylation of a broad range of substrates such as phosphorylated sugars and triphosphate nucleotides in vitro. The polypeptide is 5-amino-6-(5-phospho-D-ribitylamino)uracil phosphatase YcsE (ycsE) (Bacillus subtilis (strain 168)).